The following is a 123-amino-acid chain: Non-specific lipid-transfer protein (123 aa).

A signal peptide spans 1-25 (MAVKKMVEAVFVVGLVVTMMNVWGA). Disulfide bonds link Cys-34–Cys-82, Cys-44–Cys-59, Cys-60–Cys-104, and Cys-80–Cys-119.

This sequence belongs to the plant LTP family.

Its function is as follows. Plant non-specific lipid-transfer proteins transfer phospholipids as well as galactolipids across membranes. May play a role in wax or cutin deposition in the cell walls of expanding epidermal cells and certain secretory tissues. This is Non-specific lipid-transfer protein from Pinus taeda (Loblolly pine).